Consider the following 295-residue polypeptide: MPIFKGSGVALITPFKDEESVDFEVLGRLVDFHLEHKTDAIIVCGTTGEPSTMPDDEHLEVIRFVIDRVAGRKPVIAGVGSNHTKHAVYLSKKAQELGADGLLHVTPYYNKTTQKGLIEHFKEINDAVSIPIIVYNVPSRTGLNILPETMKELSKLPNIRAIKEASGNITQVAEIAMLCPDIDIYSGNDDQIVPVLSVGGIGVISVLANILPDETHDIVEYFLNGQVEKAKELQLKLLPIIKALFIEVNPIPVKEAMNMMGFNVGRPRLPLTTMTEKNREILKKALIDYGINIKE.

Residue T47 coordinates pyruvate. Y135 (proton donor/acceptor) is an active-site residue. K163 functions as the Schiff-base intermediate with substrate in the catalytic mechanism. I204 contributes to the pyruvate binding site.

The protein belongs to the DapA family. In terms of assembly, homotetramer; dimer of dimers.

It is found in the cytoplasm. The catalysed reaction is L-aspartate 4-semialdehyde + pyruvate = (2S,4S)-4-hydroxy-2,3,4,5-tetrahydrodipicolinate + H2O + H(+). Its pathway is amino-acid biosynthesis; L-lysine biosynthesis via DAP pathway; (S)-tetrahydrodipicolinate from L-aspartate: step 3/4. In terms of biological role, catalyzes the condensation of (S)-aspartate-beta-semialdehyde [(S)-ASA] and pyruvate to 4-hydroxy-tetrahydrodipicolinate (HTPA). In Caldicellulosiruptor saccharolyticus (strain ATCC 43494 / DSM 8903 / Tp8T 6331), this protein is 4-hydroxy-tetrahydrodipicolinate synthase.